An 812-amino-acid chain; its full sequence is MQPRRESGGLIARFAPDIRLKSAVACLFNRASLVLARRVGDGCLHPRSPPRDRTAMADNSNSSPPASRRREKPQLSCTLCRRRKLRCDRRQPCETCVRRGLSLSCTYVRPPGAAPERIDRAQGRPAGVENLPERIGQLERLITTLMDTVQAGKTPSAREPMPADSTAAGFERAAAAAAAAAAAAAAPGEAVDAADSAAKEEEEEAAPQLSDRFGRIKIEKMETAYVESTHWTAILDGIAELRDHFRDEQNAVGSAPFPGPGAAAEPAEPDEPDILFGNYRCVSKDEILSAMLPRPLVDRLVTEYFINKDIAPVIVHSVTFLREYERFWEHPRETPIMWIGLLFGVMCLGAAFQRQRSSQMPDPQQLVRLYREKIIQCLVVGKYAKCAPYTLETLLLYLNIEYLQSEDTRVETWILLGVIVRLALRMGYHRDASHFPHISPFAAEMRRRVWALIVQFDCLTSAQVGLPRMIRDSQSDTAEPRNLLDEDFDENSTALPLPQPSTVQTPVQYIVAKNRIVAVFGRICDLITSSNAPSYPEVMQLDETLHDTYRSVPGGLQMRPMTRSLTDGATVILRRMYIVLLYHKAVCMLHHRYMIPARTDGRYAYSRSTCVAAALQILSHQWTLHNETQPGGRLYEERWKVSSLVKSTFFLGTTILCAELDCSLHKEPADAEQSPAETGLRQQVIQALHNSYTVWLQASDSSREARLAADVSGLLLTRAQRKWRPAEMRQVGNMAMSSESPFMGVSIPPQSATMASAAPVEQPLSMPQLLQFNTAAHIDYSDLGAEPLGLSQGVDDMLAMSMTFPRMFNVPV.

The segment at 42–74 is disordered; the sequence is GCLHPRSPPRDRTAMADNSNSSPPASRRREKPQ. A DNA-binding region (zn(2)-C6 fungal-type) is located at residues 77–105; it reads CTLCRRRKLRCDRRQPCETCVRRGLSLSC.

It is found in the nucleus. Zn(2)-C6 fungal-type transcription factor; part of the gene cluster that mediates the biosynthesis of azaphilone pigments (MonAzPs), a complex mixture of compounds with a common azaphilone skeleton very widely used as food colorants. Acts probably as a negative regulator of the azaphilone pigments (MonAzPs) gene cluster. The chain is Zn(2)-C6 fungal-type transcription factor pigI from Monascus ruber (Mold).